The sequence spans 559 residues: Formate--tetrahydrofolate ligase (559 aa).

Residue 68–75 (TPAGEGKT) coordinates ATP.

Belongs to the formate--tetrahydrofolate ligase family. In terms of assembly, homotetramer.

The enzyme catalyses (6S)-5,6,7,8-tetrahydrofolate + formate + ATP = (6R)-10-formyltetrahydrofolate + ADP + phosphate. It functions in the pathway one-carbon metabolism; tetrahydrofolate interconversion. The chain is Formate--tetrahydrofolate ligase from Moorella thermoacetica (Clostridium thermoaceticum).